The sequence spans 278 residues: Protein FixR (278 aa).

40-64 (LLTGASRGIGHATAKLFSEAGWRII) contacts NAD(+). Residue Ser-175 coordinates substrate. Tyr-189 functions as the Proton acceptor in the catalytic mechanism.

The protein belongs to the short-chain dehydrogenases/reductases (SDR) family.

The protein is Protein FixR (fixR) of Bradyrhizobium diazoefficiens (strain JCM 10833 / BCRC 13528 / IAM 13628 / NBRC 14792 / USDA 110).